Consider the following 408-residue polypeptide: Digeranylgeranylglycerophospholipid reductase 1 (408 aa).

The FAD site is built by Ala15, Glu34, Cys45, Ala46, Gly48, Arg99, Val123, Asp279, Gly291, and Ile292.

The protein belongs to the geranylgeranyl reductase family. DGGGPL reductase subfamily. Requires FAD as cofactor.

The catalysed reaction is a 2,3-bis-O-phytanyl-sn-glycerol 1-phospholipid + 8 oxidized 2[4Fe-4S]-[ferredoxin] = a 2,3-bis-O-(geranylgeranyl)-sn-glycerol 1-phospholipid + 8 reduced 2[4Fe-4S]-[ferredoxin] + 16 H(+). The enzyme catalyses 2,3-bis-O-(phytanyl)-sn-glycerol 1-phosphate + 8 oxidized 2[4Fe-4S]-[ferredoxin] = 2,3-bis-O-(geranylgeranyl)-sn-glycerol 1-phosphate + 8 reduced 2[4Fe-4S]-[ferredoxin] + 16 H(+). It catalyses the reaction a 2,3-bis-O-phytanyl-sn-glycerol 1-phospholipid + 8 A = a 2,3-bis-O-(geranylgeranyl)-sn-glycerol 1-phospholipid + 8 AH2. It carries out the reaction CDP-2,3-bis-O-(geranylgeranyl)-sn-glycerol + 8 AH2 = CDP-2,3-bis-O-(phytanyl)-sn-glycerol + 8 A. The catalysed reaction is archaetidylserine + 8 AH2 = 2,3-bis-O-phytanyl-sn-glycero-3-phospho-L-serine + 8 A. The protein operates within membrane lipid metabolism; glycerophospholipid metabolism. Its function is as follows. Is involved in the reduction of 2,3-digeranylgeranylglycerophospholipids (unsaturated archaeols) into 2,3-diphytanylglycerophospholipids (saturated archaeols) in the biosynthesis of archaeal membrane lipids. Catalyzes the formation of archaetidic acid (2,3-di-O-phytanyl-sn-glyceryl phosphate) from 2,3-di-O-geranylgeranylglyceryl phosphate (DGGGP) via the hydrogenation of each double bond of the isoprenoid chains. Is also probably able to reduce double bonds of geranyl groups in CDP-2,3-bis-O-(geranylgeranyl)-sn-glycerol and archaetidylserine, thus acting at various stages in the biosynthesis of archaeal membrane lipids. The chain is Digeranylgeranylglycerophospholipid reductase 1 from Methanococcoides burtonii (strain DSM 6242 / NBRC 107633 / OCM 468 / ACE-M).